The sequence spans 54 residues: Large ribosomal subunit protein eL37 (54 aa).

4 residues coordinate Zn(2+): Cys20, Cys23, Cys35, and Cys38. A C4-type zinc finger spans residues 20–38 (CRRCGHHTYNVRTKRCSHC).

This sequence belongs to the eukaryotic ribosomal protein eL37 family. Requires Zn(2+) as cofactor.

In terms of biological role, binds to the 23S rRNA. This Thermoplasma volcanium (strain ATCC 51530 / DSM 4299 / JCM 9571 / NBRC 15438 / GSS1) protein is Large ribosomal subunit protein eL37 (rpl37e).